We begin with the raw amino-acid sequence, 146 residues long: Cytochrome c-type biogenesis protein CcmE (146 aa).

Residues 1–7 are Cytoplasmic-facing; the sequence is MQAKHQR. Residues 8-28 form a helical; Signal-anchor for type II membrane protein membrane-spanning segment; it reads LILGIIALAAVIAAGFLALVA. Over 29–146 the chain is Periplasmic; sequence FKKQAAYFFT…AATQTTLQEK (118 aa). 2 residues coordinate heme: H123 and Y127.

This sequence belongs to the CcmE/CycJ family.

The protein resides in the cell inner membrane. Its function is as follows. Heme chaperone required for the biogenesis of c-type cytochromes. Transiently binds heme delivered by CcmC and transfers the heme to apo-cytochromes in a process facilitated by CcmF and CcmH. This chain is Cytochrome c-type biogenesis protein CcmE, found in Zymomonas mobilis subsp. mobilis (strain ATCC 31821 / ZM4 / CP4).